Consider the following 503-residue polypeptide: Aminoaldehyde dehydrogenase 1, peroxisomal (503 aa).

Na(+) is bound by residues Ile28, Asp99, and Leu189. Gly238–Lys245 contributes to the NAD(+) binding site. Residue Glu260 is the Proton acceptor of the active site. NAD(+)-binding residues include Cys294 and Glu393. Residue Cys294 is the Nucleophile of the active site.

This sequence belongs to the aldehyde dehydrogenase family. In terms of tissue distribution, expressed in leaves, flowers and fruits.

It is found in the cytoplasm. The protein localises to the cytosol. The catalysed reaction is 4-aminobutanal + NAD(+) + H2O = 4-aminobutanoate + NADH + 2 H(+). It catalyses the reaction 3-aminopropanal + NAD(+) + H2O = beta-alanine + NADH + 2 H(+). It functions in the pathway amine and polyamine biosynthesis; betaine biosynthesis via choline pathway; betaine from betaine aldehyde: step 1/1. Its function is as follows. Dehydrogenase that catalyzes the oxidation of several aminoaldehydes. Metabolizes and detoxifies aldehyde products of polyamine degradation to non-toxic amino acids. Catalyzes the oxidation of 4-aminobutanal and 3-aminopropanal to 4-aminobutanoate and beta-alanine, respectively. This Malus domestica (Apple) protein is Aminoaldehyde dehydrogenase 1, peroxisomal.